The following is a 335-amino-acid chain: UPF0353 protein NFA_34780 (335 aa).

2 helical membrane-spanning segments follow: residues 8-28 (ALIW…YVLV) and 61-81 (IALM…PTSV). Residues 90–295 (TVVLVMDVSL…EELTAVYDTL (206 aa)) enclose the VWFA domain. Residues 310–330 (RPWLLLGMLVVAAGIVTGLLY) traverse the membrane as a helical segment.

The protein belongs to the UPF0353 family.

Its subcellular location is the cell membrane. This is UPF0353 protein NFA_34780 from Nocardia farcinica (strain IFM 10152).